Consider the following 123-residue polypeptide: Protein HesB, vegetative (123 aa).

The protein belongs to the HesB/IscA family.

Functionally, may be required for efficient nitrogen fixation. This Trichormus variabilis (strain ATCC 29413 / PCC 7937) (Anabaena variabilis) protein is Protein HesB, vegetative (hesB2).